The primary structure comprises 510 residues: ATP synthase subunit alpha (510 aa).

169–176 (GDRQTGKT) serves as a coordination point for ATP.

It belongs to the ATPase alpha/beta chains family. As to quaternary structure, F-type ATPases have 2 components, CF(1) - the catalytic core - and CF(0) - the membrane proton channel. CF(1) has five subunits: alpha(3), beta(3), gamma(1), delta(1), epsilon(1). CF(0) has three main subunits: a(1), b(2) and c(9-12). The alpha and beta chains form an alternating ring which encloses part of the gamma chain. CF(1) is attached to CF(0) by a central stalk formed by the gamma and epsilon chains, while a peripheral stalk is formed by the delta and b chains.

It localises to the cell inner membrane. It carries out the reaction ATP + H2O + 4 H(+)(in) = ADP + phosphate + 5 H(+)(out). Functionally, produces ATP from ADP in the presence of a proton gradient across the membrane. The alpha chain is a regulatory subunit. The polypeptide is ATP synthase subunit alpha (Rickettsia conorii (strain ATCC VR-613 / Malish 7)).